A 159-amino-acid polypeptide reads, in one-letter code: NAD(P)H-quinone oxidoreductase subunit N (159 aa).

This sequence belongs to the complex I NdhN subunit family. In terms of assembly, NDH-1 can be composed of about 15 different subunits; different subcomplexes with different compositions have been identified which probably have different functions.

The protein resides in the cell inner membrane. It carries out the reaction a plastoquinone + NADH + (n+1) H(+)(in) = a plastoquinol + NAD(+) + n H(+)(out). It catalyses the reaction a plastoquinone + NADPH + (n+1) H(+)(in) = a plastoquinol + NADP(+) + n H(+)(out). Functionally, NDH-1 shuttles electrons from an unknown electron donor, via FMN and iron-sulfur (Fe-S) centers, to quinones in the respiratory and/or the photosynthetic chain. The immediate electron acceptor for the enzyme in this species is believed to be plastoquinone. Couples the redox reaction to proton translocation, and thus conserves the redox energy in a proton gradient. Cyanobacterial NDH-1 also plays a role in inorganic carbon-concentration. In Gloeobacter violaceus (strain ATCC 29082 / PCC 7421), this protein is NAD(P)H-quinone oxidoreductase subunit N.